Consider the following 58-residue polypeptide: MLNMISTFFDSSSNFSEAFLAKLPEAYAIFDPIVDVMPIIPVFFLLLAFVWQAAVSFR.

Positions 1-21 are excised as a propeptide; sequence MLNMISTFFDSSSNFSEAFLA. Residues 29–49 traverse the membrane as a helical segment; that stretch reads IFDPIVDVMPIIPVFFLLLAF.

The protein belongs to the PsbK family. PSII is composed of 1 copy each of membrane proteins PsbA, PsbB, PsbC, PsbD, PsbE, PsbF, PsbH, PsbI, PsbJ, PsbK, PsbL, PsbM, PsbT, PsbX, PsbY, PsbZ, Psb30/Ycf12, at least 3 peripheral proteins of the oxygen-evolving complex and a large number of cofactors. It forms dimeric complexes.

It localises to the plastid. The protein localises to the chloroplast thylakoid membrane. Its function is as follows. One of the components of the core complex of photosystem II (PSII). PSII is a light-driven water:plastoquinone oxidoreductase that uses light energy to abstract electrons from H(2)O, generating O(2) and a proton gradient subsequently used for ATP formation. It consists of a core antenna complex that captures photons, and an electron transfer chain that converts photonic excitation into a charge separation. This Chaetosphaeridium globosum (Charophycean green alga) protein is Photosystem II reaction center protein K.